Reading from the N-terminus, the 244-residue chain is EKC/KEOPS complex subunit Tp53rkb (244 aa).

The Protein kinase domain maps to Leu-24–Gly-244. Ser-25 is modified (phosphoserine). Residues Val-30–Val-38 and Lys-51 each bind ATP. A Nuclear localization signal motif is present at residues Arg-69–Gly-86. Residue Asp-153 is the Proton acceptor of the active site.

This sequence belongs to the protein kinase superfamily. BUD32 family. In terms of assembly, component of the EKC/KEOPS complex composed of at least GON7, TP53RK, TPRKB, OSGEP and LAGE3; the whole complex dimerizes.

The protein resides in the nucleus. It carries out the reaction L-seryl-[protein] + ATP = O-phospho-L-seryl-[protein] + ADP + H(+). The catalysed reaction is L-threonyl-[protein] + ATP = O-phospho-L-threonyl-[protein] + ADP + H(+). Functionally, component of the EKC/KEOPS complex that is required for the formation of a threonylcarbamoyl group on adenosine at position 37 (t(6)A37) in tRNAs that read codons beginning with adenine. The complex is probably involved in the transfer of the threonylcarbamoyl moiety of threonylcarbamoyl-AMP (TC-AMP) to the N6 group of A37. TP53RK has ATPase activity in the context of the EKC/KEOPS complex and likely plays a supporting role to the catalytic subunit OSGEP. Atypical protein kinase that phosphorylates 'Ser-15' of p53/TP53 protein and may therefore participate in its activation. This is EKC/KEOPS complex subunit Tp53rkb from Mus musculus (Mouse).